A 112-amino-acid chain; its full sequence is Divalent-cation tolerance protein CutA (112 aa).

C16, H83, and H84 together coordinate Cu cation.

Belongs to the CutA family. In terms of assembly, homotrimer. Requires Cu cation as cofactor.

It localises to the cytoplasm. Its function is as follows. Involved in resistance toward heavy metals. This chain is Divalent-cation tolerance protein CutA, found in Shigella flexneri.